A 293-amino-acid chain; its full sequence is L-ornithine N(alpha)-acyltransferase (293 aa).

This sequence belongs to the acetyltransferase family. OlsB subfamily.

It carries out the reaction a (3R)-hydroxyacyl-[ACP] + L-ornithine = a lyso-ornithine lipid + holo-[ACP] + H(+). Its pathway is lipid metabolism. Its function is as follows. Catalyzes the first step in the biosynthesis of ornithine lipids, which are phosphorus-free membrane lipids. Catalyzes the 3-hydroxyacyl-acyl carrier protein-dependent acylation of ornithine to form lyso-ornithine lipid (LOL). The polypeptide is L-ornithine N(alpha)-acyltransferase (Agrobacterium fabrum (strain C58 / ATCC 33970) (Agrobacterium tumefaciens (strain C58))).